The sequence spans 120 residues: NAD(P)H-quinone oxidoreductase subunit 3, chloroplastic (120 aa).

A run of 3 helical transmembrane segments spans residues 9–29 (IFWA…LISG), 64–84 (MFAL…PWAM), and 88–108 (VLGV…IVGL).

Belongs to the complex I subunit 3 family. NDH is composed of at least 16 different subunits, 5 of which are encoded in the nucleus.

Its subcellular location is the plastid. The protein localises to the chloroplast thylakoid membrane. It catalyses the reaction a plastoquinone + NADH + (n+1) H(+)(in) = a plastoquinol + NAD(+) + n H(+)(out). It carries out the reaction a plastoquinone + NADPH + (n+1) H(+)(in) = a plastoquinol + NADP(+) + n H(+)(out). In terms of biological role, NDH shuttles electrons from NAD(P)H:plastoquinone, via FMN and iron-sulfur (Fe-S) centers, to quinones in the photosynthetic chain and possibly in a chloroplast respiratory chain. The immediate electron acceptor for the enzyme in this species is believed to be plastoquinone. Couples the redox reaction to proton translocation, and thus conserves the redox energy in a proton gradient. This is NAD(P)H-quinone oxidoreductase subunit 3, chloroplastic from Lupinus luteus (European yellow lupine).